We begin with the raw amino-acid sequence, 88 residues long: Small ribosomal subunit protein uS19 (88 aa).

It belongs to the universal ribosomal protein uS19 family.

Its function is as follows. Protein S19 forms a complex with S13 that binds strongly to the 16S ribosomal RNA. The polypeptide is Small ribosomal subunit protein uS19 (Chlamydia felis (strain Fe/C-56) (Chlamydophila felis)).